The sequence spans 33 residues: Vejocalcin (33 aa).

Cystine bridges form between C3-C17, C10-C21, and C16-C32. An essential for stimulation of [3H]ryanodine binding to RYR1 region spans residues 23 to 24 (RR).

As to expression, expressed by the venom gland.

The protein resides in the secreted. In terms of biological role, this toxin stabilizes ryanodine receptor 1 (RyR1) opening in a long-lasting subconductance state (60% of the full conductance state). Furthermore, it triggers calcium release from sarcoplasmic vesicles (31 nM are enough to induce a sharp release, and 65% of the total calcium is released after toxin (100 nM) addition) probably by acting as a cell-penetrating peptide (CPP). In addition, it has been shown to dose-dependently stimulate ryanodine binding to RyR1 (EC(50)=3.7 nM). It also augments the bell-shaped calcium-[3H]ryanodine binding curve that is maximal at about 10 uM calcium concentration. It binds a different site as ryanodine. It acts synergistically with caffeine. In vivo, intracerebroventricular injection into mice induces neurotoxic symptoms, followed by death. The sequence is that of Vejocalcin from Vaejovis mexicanus (Mexican scorpion).